A 512-amino-acid polypeptide reads, in one-letter code: Ferrochelatase-2, chloroplastic (512 aa).

The disordered stretch occupies residues 1-32 (MNCPAMTASPSSSSSSSYSTFRPPPPLLPQLS). Residues 1–83 (MNCPAMTASP…SNPLNISSSS (83 aa)) constitute a chloroplast transit peptide. The segment covering 9-21 (SPSSSSSSSYSTF) has biased composition (low complexity). Valine 84 is modified (N-acetylvaline).

This sequence belongs to the ferrochelatase family. In terms of tissue distribution, expressed in leaves and flowers.

Its subcellular location is the plastid. The protein localises to the chloroplast membrane. It is found in the chloroplast thylakoid membrane. The enzyme catalyses heme b + 2 H(+) = protoporphyrin IX + Fe(2+). The protein operates within porphyrin-containing compound metabolism; protoheme biosynthesis; protoheme from protoporphyrin-IX: step 1/1. In terms of biological role, catalyzes the last step of heme biosynthesis by inserting ferrous iron into protoporphyrin IX to produce protoheme. Produces heme for photosynthetic cytochromes, and for proteins involved in abiotic and biotic stress responses. May play a role in the quality control of individual chloroplasts during photo-oxidative stress through regulation of heme biosynthesis. The polypeptide is Ferrochelatase-2, chloroplastic (Arabidopsis thaliana (Mouse-ear cress)).